The chain runs to 270 residues: Interleukin-1 alpha (270 aa).

The propeptide occupies 1–112 (MAKVPDLFED…EVEEEIMKPR (112 aa)). Lys82 carries the N6-acetyllysine modification. Residues 82–86 (KKRRL) form a nuclear localization signal (NLS) region. The residue at position 87 (Ser87) is a Phosphoserine. Asn139 carries an N-linked (GlcNAc...) asparagine glycan.

This sequence belongs to the IL-1 family. As to quaternary structure, monomer. Interacts with TMED10; the interaction mediates the translocation from the cytoplasm into the ERGIC (endoplasmic reticulum-Golgi intermediate compartment) and thereby secretion. Interacts with IL1R1. Interacts with S100A13; this interaction is the first step in the export of IL1A, followed by direct translocation of this complex across the plasma membrane. Acetylated within its nuclear localization sequence, which impacts subcellular localization. Post-translationally, proteolytic processed by CAPN1 in a calcium-dependent manner. Cleavage from 31 kDa precursor to 18 kDa biologically active molecules. In terms of processing, phosphorylated. Phosphorylation greatly enhances susceptibility to digestion and promotes the conversion of pre-IL1A alpha to the biologically active IL1A.

It is found in the nucleus. The protein localises to the cytoplasm. The protein resides in the secreted. Its function is as follows. Cytokine constitutively present intracellularly in nearly all resting non-hematopoietic cells that plays an important role in inflammation and bridges the innate and adaptive immune systems. After binding to its receptor IL1R1 together with its accessory protein IL1RAP, forms the high affinity interleukin-1 receptor complex. Signaling involves the recruitment of adapter molecules such as MYD88, IRAK1 or IRAK4. In turn, mediates the activation of NF-kappa-B and the three MAPK pathways p38, p42/p44 and JNK pathways. Within the cell, acts as an alarmin and cell death results in its liberation in the extracellular space after disruption of the cell membrane to induce inflammation and alert the host to injury or damage. In addition to its role as a danger signal, which occurs when the cytokine is passively released by cell necrosis, directly senses DNA damage and acts as signal for genotoxic stress without loss of cell integrity. In Felis catus (Cat), this protein is Interleukin-1 alpha (IL1A).